The chain runs to 340 residues: Heat-inducible transcription repressor HrcA (340 aa).

This sequence belongs to the HrcA family.

Its function is as follows. Negative regulator of class I heat shock genes (grpE-dnaK-dnaJ and groELS operons). Prevents heat-shock induction of these operons. This is Heat-inducible transcription repressor HrcA from Burkholderia cenocepacia (strain HI2424).